Reading from the N-terminus, the 1291-residue chain is Ethylene-insensitive protein 2.2 (1291 aa).

Transmembrane regions (helical) follow at residues 18–38 (ALPA…PGKW), 48–68 (FGFD…LCQY), 96–116 (FLGV…ILGI), 128–148 (LSTC…FATL), 155–175 (SFLS…GVLI), and 195–215 (SAFA…FFLH). A glycan (N-linked (GlcNAc...) asparagine) is linked at Asn227. The next 7 membrane-spanning stretches (helical) occupy residues 231 to 251 (GALC…IYLV), 253 to 273 (YVLM…LLTF), 288 to 308 (VALC…ALTW), 335 to 355 (IIAV…GIYQ), 356 to 376 (LLIF…IPLF), 393 to 413 (FLEF…IIFV), and 441 to 461 (VLLI…ATPL). The interval 498–518 (TEEESIGGQEQLSGPGKSAES) is disordered. An N-linked (GlcNAc...) asparagine glycan is attached at Asn550. Residues 614 to 662 (AEKEDDEGDSWEPEESSKGVPGSTSSLTSDGPGSFRSLSGKSDEGGNGA) are disordered. The span at 617 to 627 (EDDEGDSWEPE) shows a compositional bias: acidic residues. Positions 635–653 (GSTSSLTSDGPGSFRSLSG) are enriched in polar residues. Residues Ser647 and Ser664 each carry the phosphoserine modification. Disordered stretches follow at residues 742-768 (QIHS…GGQR) and 787-808 (GPSR…TLPS). Residues 759–768 (NIDSSYGGQR) show a composition bias toward polar residues. A Phosphothreonine modification is found at Thr818. The tract at residues 836 to 856 (GSSSLNGQMDSPAPISPSLGP) is disordered. A glycan (N-linked (GlcNAc...) asparagine) is linked at Asn891. Residue Ser923 is modified to Phosphoserine. Residue Asn1027 is glycosylated (N-linked (GlcNAc...) asparagine). Residues 1210-1229 (HRSSPPVSNGMLPPASKPGR) are disordered. Residues 1262–1269 (DVAFPKGK) carry the Nuclear localization signal motif.

It belongs to the NRAMP (TC 2.A.55) family.

Its subcellular location is the endoplasmic reticulum membrane. The protein localises to the nucleus. It localises to the cytoplasm. Its function is as follows. Central factor in signaling pathways regulated by ethylene (ET) and involved in various processes including development, plant defense, senescence, nucleotide sugar flux, and tropisms. Functionally, trafficking signal inducing ethylene response. The nuclear localization is both necessary and sufficient to activate EIN3-mediated transcription and ethylene responses. This Populus trichocarpa (Western balsam poplar) protein is Ethylene-insensitive protein 2.2.